The following is a 513-amino-acid chain: MQLNPSEISELIKSRISGLGADAEVRNTGTVISVTDGICRVHGLSGVMQGEMLEFPGNTFGLALNLERDSVGAVVLGDYEHISEGDTVKCTGRILEVPVGKELLGRVVNTLGQPIDGKGPINAKETDVIEKVAPGVIARQSVSQPVQTGLKSIDSMVPIGRGQRELIIGDRQTGKTAVAVDAIINQKGKGIFCVYVAIGQKASTIANVVRKLEEHGAMEYTVVVAAAASDSAAMQYLAAYAGCTMGEYFRDRGEDALIVYDDLTKQAWAYRQVSLLLRRPPGREAYPGDVFYLHSRLLERAARVNEEYVENFTKGAVKGKTGSLTALPIIETQAGDVSAFVPTNVISITDGQIFLETDLFNAGIRPAINAGISVSRVGGAAQTKVVKNLSGGIRTDLAQYRELAAFAQFASDLDDATRKQLERGRRVTELLKQAQYQPQQVWQLAASLFAANNGFLDNVEVKDILPFEKGLHDHLKTKYADLVNRIEETKVLSKEDEPALRAAIEDFRKSAAF.

169–176 (GDRQTGKT) serves as a coordination point for ATP.

Belongs to the ATPase alpha/beta chains family. In terms of assembly, F-type ATPases have 2 components, CF(1) - the catalytic core - and CF(0) - the membrane proton channel. CF(1) has five subunits: alpha(3), beta(3), gamma(1), delta(1), epsilon(1). CF(0) has three main subunits: a(1), b(2) and c(9-12). The alpha and beta chains form an alternating ring which encloses part of the gamma chain. CF(1) is attached to CF(0) by a central stalk formed by the gamma and epsilon chains, while a peripheral stalk is formed by the delta and b chains.

It is found in the cell inner membrane. It carries out the reaction ATP + H2O + 4 H(+)(in) = ADP + phosphate + 5 H(+)(out). Produces ATP from ADP in the presence of a proton gradient across the membrane. The alpha chain is a regulatory subunit. This Cupriavidus pinatubonensis (strain JMP 134 / LMG 1197) (Cupriavidus necator (strain JMP 134)) protein is ATP synthase subunit alpha.